A 509-amino-acid chain; its full sequence is 2,3-bisphosphoglycerate-independent phosphoglycerate mutase (509 aa).

Aspartate 11 lines the Mn(2+) pocket. Phosphotyrosine is present on tyrosine 35. Serine 61 contributes to the Mn(2+) binding site. The Phosphoserine intermediate role is filled by serine 61. Substrate is bound by residues histidine 122, 152–153 (RD), arginine 184, arginine 190, 260–263 (RPDR), and lysine 335. Mn(2+) contacts are provided by aspartate 402, histidine 406, aspartate 443, histidine 444, and histidine 461.

The protein belongs to the BPG-independent phosphoglycerate mutase family. As to quaternary structure, monomer. Mn(2+) serves as cofactor.

The enzyme catalyses (2R)-2-phosphoglycerate = (2R)-3-phosphoglycerate. Its pathway is carbohydrate degradation; glycolysis; pyruvate from D-glyceraldehyde 3-phosphate: step 3/5. In terms of biological role, essential for rapid growth and for sporulation. Catalyzes the interconversion of 2-phosphoglycerate and 3-phosphoglycerate. This Bacillus anthracis protein is 2,3-bisphosphoglycerate-independent phosphoglycerate mutase.